Reading from the N-terminus, the 474-residue chain is Magnesium transporter MRS2-A, chloroplastic (474 aa).

The N-terminal 55 residues, 1–55 (MASVSSSPSYSSQAAVLLLLHQPPHQHGHGGACLRYRGSQSQGRGNAVATSLGLS), are a transit peptide targeting the chloroplast. Residues 79-129 (GKDGRAVTKDEEEEAAAAAVEEEGEVEVRREEDKPGDDGSREAAARGSGSG) are disordered. Positions 88-103 (DEEEEAAAAAVEEEGE) are enriched in acidic residues. The segment covering 104–122 (VEVRREEDKPGDDGSREAA) has biased composition (basic and acidic residues). 2 consecutive transmembrane segments (helical) span residues 412–432 (LLLQVGTFCVAIGALIAGIFG) and 444–464 (WAFWATTGGIVVGAVAGFFIM). A Required for magnesium transport activity motif is present at residues 432–434 (GMN).

Belongs to the CorA metal ion transporter (MIT) (TC 1.A.35.5) family.

The protein localises to the plastid. It is found in the chloroplast membrane. In terms of biological role, magnesium transporter that may mediate the influx of magnesium in chloroplast. The sequence is that of Magnesium transporter MRS2-A, chloroplastic (MRS2-A) from Oryza sativa subsp. japonica (Rice).